A 252-amino-acid polypeptide reads, in one-letter code: Probable S-methyl-5'-thioinosine phosphorylase (252 aa).

Residues Thr-8 and 44 to 45 contribute to the phosphate site; that span reads RH. Met-173 provides a ligand contact to substrate. Phosphate is bound at residue Thr-174. Residue 197–199 coordinates substrate; it reads NYA.

It belongs to the PNP/MTAP phosphorylase family. MTAP subfamily. Homotrimer.

The catalysed reaction is S-methyl-5'-thioinosine + phosphate = 5-(methylsulfanyl)-alpha-D-ribose 1-phosphate + hypoxanthine. It functions in the pathway purine metabolism; purine nucleoside salvage. Catalyzes the reversible phosphorylation of S-methyl-5'-thioinosine (MTI) to hypoxanthine and 5-methylthioribose-1-phosphate. Involved in the breakdown of S-methyl-5'-thioadenosine (MTA), a major by-product of polyamine biosynthesis. Catabolism of (MTA) occurs via deamination to MTI and phosphorolysis to hypoxanthine. In Methanocaldococcus jannaschii (strain ATCC 43067 / DSM 2661 / JAL-1 / JCM 10045 / NBRC 100440) (Methanococcus jannaschii), this protein is Probable S-methyl-5'-thioinosine phosphorylase.